The sequence spans 107 residues: Integration host factor subunit beta (107 aa).

The tract at residues 76-107 (FVPHFKPGKELRERVDGRAGEPLKADDPDDDR) is disordered. Residues 82–101 (PGKELRERVDGRAGEPLKAD) are compositionally biased toward basic and acidic residues.

The protein belongs to the bacterial histone-like protein family. Heterodimer of an alpha and a beta chain.

This protein is one of the two subunits of integration host factor, a specific DNA-binding protein that functions in genetic recombination as well as in transcriptional and translational control. The protein is Integration host factor subunit beta of Burkholderia cenocepacia (strain HI2424).